Consider the following 276-residue polypeptide: A-factor receptor protein (276 aa).

In terms of domain architecture, HTH tetR-type spans 8–68 (VQTWRSIVDA…AIMDEQTSTV (61 aa)). Residues 31 to 50 (AISEILRRAKVTKGALYFHF) constitute a DNA-binding region (H-T-H motif). Positions 207–220 (EKAEREEQEARIAA) are enriched in basic and acidic residues. The interval 207–276 (EKAEREEQEA…AGVAAGGVVA (70 aa)) is disordered. Residues 221-235 (EAKGAGSDAATDSGS) are compositionally biased toward low complexity. Residues 236–257 (RSGGSGLRGGGSGRGPRAGGAG) show a composition bias toward gly residues.

Homodimer or multimer. Binds to both DNA and A-factor as a homodimer.

The protein localises to the cytoplasm. In terms of biological role, represses adpA expression by binding to the promoter region in the absence of A-factor, causing repression of streptomycin production and of sporulation. The polypeptide is A-factor receptor protein (arpA) (Streptomyces griseus).